A 205-amino-acid chain; its full sequence is Latherin (205 aa).

An intrachain disulfide couples cysteine 133 to cysteine 176.

The protein belongs to the BPI/LBP/Plunc superfamily. Plunc family. In terms of assembly, monomer.

The protein localises to the secreted. Major protein in sweat, has surfactant properties. This chain is Latherin (LATH), found in Equus quagga burchellii (Burchell's zebra).